A 442-amino-acid chain; its full sequence is Glutamate-1-semialdehyde 2,1-aminomutase (442 aa).

K282 bears the N6-(pyridoxal phosphate)lysine mark.

It belongs to the class-III pyridoxal-phosphate-dependent aminotransferase family. HemL subfamily. In terms of assembly, homodimer. The cofactor is pyridoxal 5'-phosphate.

Its subcellular location is the cytoplasm. The catalysed reaction is (S)-4-amino-5-oxopentanoate = 5-aminolevulinate. The protein operates within porphyrin-containing compound metabolism; protoporphyrin-IX biosynthesis; 5-aminolevulinate from L-glutamyl-tRNA(Glu): step 2/2. This Polaromonas sp. (strain JS666 / ATCC BAA-500) protein is Glutamate-1-semialdehyde 2,1-aminomutase.